Reading from the N-terminus, the 122-residue chain is Aspartate 1-decarboxylase (122 aa).

Residue S25 is the Schiff-base intermediate with substrate; via pyruvic acid of the active site. S25 carries the post-translational modification Pyruvic acid (Ser). Residue T57 coordinates substrate. Catalysis depends on Y58, which acts as the Proton donor. 73-75 lines the substrate pocket; the sequence is GAA.

This sequence belongs to the PanD family. In terms of assembly, heterooctamer of four alpha and four beta subunits. Pyruvate is required as a cofactor. In terms of processing, is synthesized initially as an inactive proenzyme, which is activated by self-cleavage at a specific serine bond to produce a beta-subunit with a hydroxyl group at its C-terminus and an alpha-subunit with a pyruvoyl group at its N-terminus.

It is found in the cytoplasm. The enzyme catalyses L-aspartate + H(+) = beta-alanine + CO2. The protein operates within cofactor biosynthesis; (R)-pantothenate biosynthesis; beta-alanine from L-aspartate: step 1/1. Functionally, catalyzes the pyruvoyl-dependent decarboxylation of aspartate to produce beta-alanine. The sequence is that of Aspartate 1-decarboxylase from Bordetella pertussis (strain Tohama I / ATCC BAA-589 / NCTC 13251).